We begin with the raw amino-acid sequence, 146 residues long: D-aminoacyl-tRNA deacylase (146 aa).

The Gly-cisPro motif, important for rejection of L-amino acids motif lies at 137–138; the sequence is GP.

Belongs to the DTD family. As to quaternary structure, homodimer.

It is found in the cytoplasm. The catalysed reaction is glycyl-tRNA(Ala) + H2O = tRNA(Ala) + glycine + H(+). It catalyses the reaction a D-aminoacyl-tRNA + H2O = a tRNA + a D-alpha-amino acid + H(+). In terms of biological role, an aminoacyl-tRNA editing enzyme that deacylates mischarged D-aminoacyl-tRNAs. Also deacylates mischarged glycyl-tRNA(Ala), protecting cells against glycine mischarging by AlaRS. Acts via tRNA-based rather than protein-based catalysis; rejects L-amino acids rather than detecting D-amino acids in the active site. By recycling D-aminoacyl-tRNA to D-amino acids and free tRNA molecules, this enzyme counteracts the toxicity associated with the formation of D-aminoacyl-tRNA entities in vivo and helps enforce protein L-homochirality. The sequence is that of D-aminoacyl-tRNA deacylase from Bacillus mycoides (strain KBAB4) (Bacillus weihenstephanensis).